Here is a 141-residue protein sequence, read N- to C-terminus: HTH-type transcriptional regulator MntR (141 aa).

In terms of domain architecture, HTH dtxR-type spans 1-63; the sequence is MPTPSMEDYI…YEKYRGLVLT (63 aa). Mn(2+) contacts are provided by Asp8, Glu11, His77, Glu99, Glu102, and His103.

It belongs to the DtxR/MntR family. Homodimer.

It localises to the cytoplasm. DNA binding is strongly activated by Mn(2+). Its function is as follows. Central regulator of manganese homeostasis. This is HTH-type transcriptional regulator MntR from Geobacillus thermodenitrificans (strain NG80-2).